The chain runs to 51 residues: Large ribosomal subunit protein eL39 (51 aa).

It belongs to the eukaryotic ribosomal protein eL39 family.

The chain is Large ribosomal subunit protein eL39 from Methanococcoides burtonii (strain DSM 6242 / NBRC 107633 / OCM 468 / ACE-M).